The primary structure comprises 523 residues: MESAPAAPDPAASEPGSSGSEAAAGSRETPLTQDTGRKSEAPGAGRRQSYASSSRGISVTKKTHTSQIEIIPCKICGDKSSGIHYGVITCEGCKGFFRRSQQSNATYSCPRQKNCLIDRTSRNRCQHCRLQKCLAVGMSRDAVKFGRMSKKQRDSLYAEVQKHRMQQQQRDHQQQPGEAEPLTPTYNISANGLTELHDDLSTYMDGHTPEGSKADSAVSSFYLDIQPSPDQSGLDINGIKPEPICDYTPASGFFPYCSFTNGETSPTVSMAELEHLAQNISKSHLETCQYLREELQQITWQTFLQEEIENYQNKQREVMWQLCAIKITEAIQYVVEFAKRIDGFMELCQNDQIVLLKAGSLEVVFIRMCRAFDSQNNTVYFDGKYASPDVFKSLGCEDFISFVFEFGKSLCSMHLTEDEIALFSAFVLMSADRSWLQEKVKIEKLQQKIQLALQHVLQKNHREDGILTKLICKVSTLRALCGRHTEKLMAFKAIYPDIVRLHFPPLYKELFTSEFEPAMQIDG.

A compositionally biased stretch (low complexity) spans 1-26 (MESAPAAPDPAASEPGSSGSEAAAGS). The segment at 1-63 (MESAPAAPDP…SRGISVTKKT (63 aa)) is disordered. An N6-methyllysine modification is found at Lys-38. 2 NR C4-type zinc fingers span residues 73–93 (CKICGDKSSGIHYGVITCEGC) and 109–133 (CPRQKNCLIDRTSRNRCQHCRLQKC). The segment at residues 73 to 138 (CKICGDKSSG…RLQKCLAVGM (66 aa)) is a DNA-binding region (nuclear receptor). Positions 154–183 (DSLYAEVQKHRMQQQQRDHQQQPGEAEPLT) are disordered. Thr-183 bears the Phosphothreonine; by MAPK1 mark. Lys-240 is covalently cross-linked (Glycyl lysine isopeptide (Lys-Gly) (interchain with G-Cter in SUMO)). The NR LBD domain maps to 272 to 510 (ELEHLAQNIS…LHFPPLYKEL (239 aa)). The AF-2 signature appears at 506 to 511 (LYKELF).

Belongs to the nuclear hormone receptor family. NR1 subfamily. As to quaternary structure, monomer. Interacts (via the DNA-binding domain) with HIF1A; the interaction enhances HIF1A transcription under hypoxia through increasing protein stability. Interacts with CEBPB; the interaction disrupts the interaction CEBPB:EP300. Interacts with the coactivators NCOA2, PPARGC1A (via LXXLL motif), EP300 and MED1. Interacts with the corepressor NCOR1. Interacts with MAGED1 and CTNNB1. Interacts with CRY1 and PER2. Interacts (via AF-2 motif) with PROX1. Interacts with NRIP1. Isoform 4 interacts (via AF-2 motif) with isoform 1 of FOXP3 (via LXXLL motif). Post-translationally, phosphorylation by conventional PKCs in neurons inhibits transcriptional activity. Phosphorylated on Thr-183 by MAPK1/ERK1 in vitro. In terms of processing, sumoylated by SENP1 and SENP2. Sumoylation, promoted by PIAS2, PIAS3, PIAS4 but not PIAS1, enhances the transcriptional activity. Desumoylated by SENP1. Ubiquitinated, leading to its degradation by the proteasome. Proteasomal degradation is required for efficient transcriptional activity and is prevented by HR. Post-translationally, monomethylated at Lys-38 by EZH2, this creates a degron recognized by a DCX (DDB1-DCAF1/VPRBP-CUL4A-RBX1) E3 ubiquitin ligase complex. Expressed in cerebellum, heart, liver, lung, kidney, retina and brown and white adipose tissues. Expressed in the subset of mature Th17 cells.

The protein localises to the nucleus. Its function is as follows. Nuclear receptor that binds DNA as a monomer to ROR response elements (RORE) containing a single core motif half-site 5'-AGGTCA-3' preceded by a short A-T-rich sequence. Key regulator of embryonic development, cellular differentiation, immunity, circadian rhythm as well as lipid, steroid, xenobiotics and glucose metabolism. Considered to have intrinsic transcriptional activity, have some natural ligands like oxysterols that act as agonists (25-hydroxycholesterol) or inverse agonists (7-oxygenated sterols), enhancing or repressing the transcriptional activity, respectively. Recruits distinct combinations of cofactors to target genes regulatory regions to modulate their transcriptional expression, depending on the tissue, time and promoter contexts. Regulates genes involved in photoreceptor development including OPN1SW, OPN1SM and ARR3 and skeletal muscle development with MYOD1. Required for proper cerebellum development, regulates SHH gene expression, among others, to induce granule cells proliferation as well as expression of genes involved in calcium-mediated signal transduction. Regulates the circadian expression of several clock genes, including CLOCK, BMAL1, NPAS2 and CRY1. Competes with NR1D1 for binding to their shared DNA response element on some clock genes such as BMAL1, CRY1 and NR1D1 itself, resulting in NR1D1-mediated repression or RORA-mediated activation of clock genes expression, leading to the circadian pattern of clock genes expression. Therefore influences the period length and stability of the clock. Regulates genes involved in lipid metabolism such as apolipoproteins APOA1, APOA5, APOC3 and PPARG. In liver, has specific and redundant functions with RORC as positive or negative modulator of expression of genes encoding phase I and phase II proteins involved in the metabolism of lipids, steroids and xenobiotics, such as CYP7B1 and SULT2A1. Induces a rhythmic expression of some of these genes. In addition, interplays functionally with NR1H2 and NR1H3 for the regulation of genes involved in cholesterol metabolism. Also involved in the regulation of hepatic glucose metabolism through the modulation of G6PC1 and PCK1. In adipose tissue, plays a role as negative regulator of adipocyte differentiation, probably acting through dual mechanisms. May suppress CEBPB-dependent adipogenesis through direct interaction and PPARG-dependent adipogenesis through competition for DNA-binding. Downstream of IL6 and TGFB and synergistically with RORC isoform 2, is implicated in the lineage specification of uncommitted CD4(+) T-helper (T(H)) cells into T(H)17 cells, antagonizing the T(H)1 program. Probably regulates IL17 and IL17F expression on T(H) by binding to the essential enhancer conserved non-coding sequence 2 (CNS2) in the IL17-IL17F locus. Involved in hypoxia signaling by interacting with and activating the transcriptional activity of HIF1A. May inhibit cell growth in response to cellular stress. May exert an anti-inflammatory role by inducing CHUK expression and inhibiting NF-kappa-B signaling. The chain is Nuclear receptor ROR-alpha (Rora) from Mus musculus (Mouse).